Consider the following 966-residue polypeptide: Leucine--tRNA ligase (966 aa).

The short motif at P41 to H51 is the 'HIGH' region element. Residues K632 to S636 carry the 'KMSKS' region motif. Position 635 (K635) interacts with ATP.

Belongs to the class-I aminoacyl-tRNA synthetase family.

It is found in the cytoplasm. It catalyses the reaction tRNA(Leu) + L-leucine + ATP = L-leucyl-tRNA(Leu) + AMP + diphosphate. This chain is Leucine--tRNA ligase, found in Methanosarcina mazei (strain ATCC BAA-159 / DSM 3647 / Goe1 / Go1 / JCM 11833 / OCM 88) (Methanosarcina frisia).